A 387-amino-acid chain; its full sequence is Beta-alanyl-dopamine/carcinine hydrolase (387 aa).

This sequence belongs to the peptidase C45 family. The unprocessed protein forms homodimers. May form heterodimers composed of a 15 kDa alpha subunit and a 30 kDa beta subunit. In terms of processing, the protein is synthesized as a 43 kDa precursor which is then self-processed into a 15 kDa alpha subunit and a 30 kDa beta subunit. Processing appears to be necessary for beta-alanyl-dopamine/carcinine hydrolase activity. The beta subunit carries the beta-alanyl-dopamine/carcinine hydrolase activity. In terms of tissue distribution, expressed in body, head, optic lobes and retina (at protein level). Expressed in photoreceptor cells R1-R6 in the lamina and in photoreceptor cells R7 and R8 in the medulla (at protein level).

Its subcellular location is the cell projection. It is found in the axon. It localises to the cytoplasm. The catalysed reaction is carcinine + H2O = histamine + beta-alanine. It catalyses the reaction beta-alanyl-dopamine + H2O = dopamine + beta-alanine. Functionally, in the cuticle, catalyzes the hydrolysis of beta-alanyl-dopamine releasing dopamine and beta-alanine; dopamine is a metabolite involved in the pigmentation and sclerotization of the insect cuticle. In the photoreceptor cells, catalyzes the hydrolysis of carcinine releasing histamine and beta-alanine contributing to the recycling of the neurotransmitter histamine in the optical nerve system. Also, regulates the cuticular hydrocarbon composition in females. The polypeptide is Beta-alanyl-dopamine/carcinine hydrolase (Drosophila melanogaster (Fruit fly)).